The sequence spans 757 residues: Serine/threonine-protein phosphatase 2A 56 kDa regulatory subunit delta isoform (757 aa).

The span at 1 to 11 (MMRGFKQRLIK) shows a compositional bias: basic residues. 2 disordered regions span residues 1–172 (MMRG…EDHA) and 188–250 (ISNA…NPDT). Low complexity predominate over residues 12–21 (KTTGSSSSSS). A compositionally biased stretch (basic and acidic residues) spans 23–34 (KKKDKEKEKEKS). 3 stretches are compositionally biased toward low complexity: residues 35-66 (STTS…GSKS), 86-119 (SSTS…STKK), and 128-147 (QSKQ…SSSS). Over residues 160 to 172 (TKDDKSTSGEDHA) the composition is skewed to basic and acidic residues. Residues 197 to 216 (SSDVENGNSNNNNMNINTSN) are compositionally biased toward low complexity. A compositionally biased stretch (polar residues) spans 217-228 (TQDANHASSQSI). Phosphothreonine occurs at positions 242 and 257. The disordered stretch occupies residues 734–757 (SFNTASENNTLNEENENDCDSEIQ). Residues 746 to 757 (EENENDCDSEIQ) are compositionally biased toward acidic residues.

Belongs to the phosphatase 2A regulatory subunit B family. In terms of assembly, PP2A consists of a common heterodimeric core enzyme, composed of a 36 kDa catalytic subunit (subunit C) and a 65 kDa constant regulatory subunit (PR65 or subunit A), that associates with a variety of regulatory subunits. Proteins that associate with the core dimer include three families of regulatory subunits B (the R2/B/PR55/B55, R3/B''/PR72/PR130/PR59 and R5/B'/B56 families), the 48 kDa variable regulatory subunit, viral proteins, and cell signaling molecules.

The protein localises to the cytoplasm. It localises to the nucleus. The B regulatory subunit might modulate substrate selectivity and catalytic activity, and might also direct the localization of the catalytic enzyme to a particular subcellular compartment. Its function is as follows. Multicopy suppressor of ROX3 and HSP60. This is Serine/threonine-protein phosphatase 2A 56 kDa regulatory subunit delta isoform (RTS1) from Saccharomyces cerevisiae (strain ATCC 204508 / S288c) (Baker's yeast).